The primary structure comprises 1284 residues: ABC multidrug transporter atrC (1284 aa).

Positions 1 to 11 (MKSTAESKETP) are enriched in basic and acidic residues. The tract at residues 1–24 (MKSTAESKETPSQDESTTSVPCTE) is disordered. Transmembrane regions (helical) follow at residues 55–75 (AVAI…NLIF), 99–119 (AAEL…LSYT), 178–198 (IGLL…AFVV), 203–223 (TLIC…VAAV), 282–302 (LLGL…GLAF), and 320–340 (IFTV…LAPY). One can recognise an ABC transmembrane type-1 1 domain in the interval 55–346 (AVAILAACAS…LAPYSIEFSR (292 aa)). The 246-residue stretch at 381 to 626 (VELENVTFSY…DGVYAGLVKI (246 aa)) folds into the ABC transporter 1 domain. N-linked (GlcNAc...) asparagine glycans are attached at residues asparagine 385 and asparagine 401. Residue 416–423 (GQSGSGKS) participates in ATP binding. 2 N-linked (GlcNAc...) asparagine glycosylation sites follow: asparagine 488 and asparagine 632. 2 helical membrane-spanning segments follow: residues 705-725 (LVVL…AILM) and 745-765 (FYAS…LAVG). The 288-residue stretch at 705 to 992 (LVVLLGCLGG…LFQWSTSITK (288 aa)) folds into the ABC transmembrane type-1 2 domain. A glycan (N-linked (GlcNAc...) asparagine) is linked at asparagine 800. Helical transmembrane passes span 824–844 (IALV…AIAF), 846–866 (WKLG…AGMV), 931–951 (MICF…GFWY), and 955–975 (LVSL…SVFF). An N-linked (GlcNAc...) asparagine glycan is attached at asparagine 995. The 254-residue stretch at 1027–1280 (IAMDNVRFSY…GGLYRRMCEA (254 aa)) folds into the ABC transporter 2 domain. 1062-1069 (GSSGCGKS) lines the ATP pocket. The N-linked (GlcNAc...) asparagine glycan is linked to asparagine 1122.

Belongs to the ABC transporter superfamily. ABCB family. Multidrug resistance exporter (TC 3.A.1.201) subfamily.

Its subcellular location is the cell membrane. Pleiotropic ABC efflux transporter involved in the protection of the cells against a wide range of toxic compounds. The polypeptide is ABC multidrug transporter atrC (Emericella nidulans (strain FGSC A4 / ATCC 38163 / CBS 112.46 / NRRL 194 / M139) (Aspergillus nidulans)).